A 156-amino-acid polypeptide reads, in one-letter code: Ribosome maturation factor RimP (156 aa).

Belongs to the RimP family.

The protein resides in the cytoplasm. Functionally, required for maturation of 30S ribosomal subunits. The polypeptide is Ribosome maturation factor RimP (Gloeobacter violaceus (strain ATCC 29082 / PCC 7421)).